Consider the following 353-residue polypeptide: Photosystem II protein D1 (353 aa).

N-acetylthreonine is present on T2. T2 is subject to Phosphothreonine. 3 helical membrane passes run 29-46, 118-133, and 142-156; these read YIGW…TATS, HFFL…EWEL, and WIAV…AATA. H118 contacts chlorophyll a. Pheophytin a is bound at residue Y126. Residues D170 and E189 each coordinate [CaMn4O5] cluster. Residues 197-218 traverse the membrane as a helical segment; it reads FHMLGVAGVFGGSLFSAMHGSL. H198 serves as a coordination point for chlorophyll a. A quinone is bound by residues H215 and 264-265; that span reads SF. A Fe cation-binding site is contributed by H215. A Fe cation-binding site is contributed by H272. Residues 274–288 traverse the membrane as a helical segment; that stretch reads FLAAWPVVGIWFTAL. [CaMn4O5] cluster is bound by residues H332, E333, D342, and A344. Positions 345 to 353 are excised as a propeptide; the sequence is SVEAPSVNA.

Belongs to the reaction center PufL/M/PsbA/D family. In terms of assembly, PSII is composed of 1 copy each of membrane proteins PsbA, PsbB, PsbC, PsbD, PsbE, PsbF, PsbH, PsbI, PsbJ, PsbK, PsbL, PsbM, PsbT, PsbX, PsbY, PsbZ, Psb30/Ycf12, at least 3 peripheral proteins of the oxygen-evolving complex and a large number of cofactors. It forms dimeric complexes. The cofactor is The D1/D2 heterodimer binds P680, chlorophylls that are the primary electron donor of PSII, and subsequent electron acceptors. It shares a non-heme iron and each subunit binds pheophytin, quinone, additional chlorophylls, carotenoids and lipids. D1 provides most of the ligands for the Mn4-Ca-O5 cluster of the oxygen-evolving complex (OEC). There is also a Cl(-1) ion associated with D1 and D2, which is required for oxygen evolution. The PSII complex binds additional chlorophylls, carotenoids and specific lipids.. Post-translationally, the 9 C-terminal residues are removed, probably by CTPA (AC O04073); processing is essential to allow assembly of the oxygen-evolving complex and thus photosynthetic growth. In terms of processing, tyr-161 forms a radical intermediate that is referred to as redox-active TyrZ, YZ or Y-Z.

It localises to the plastid. It is found in the chloroplast thylakoid membrane. It carries out the reaction 2 a plastoquinone + 4 hnu + 2 H2O = 2 a plastoquinol + O2. Its function is as follows. Photosystem II (PSII) is a light-driven water:plastoquinone oxidoreductase that uses light energy to abstract electrons from H(2)O, generating O(2) and a proton gradient subsequently used for ATP formation. It consists of a core antenna complex that captures photons, and an electron transfer chain that converts photonic excitation into a charge separation. The D1/D2 (PsbA/PsbD) reaction center heterodimer binds P680, the primary electron donor of PSII as well as several subsequent electron acceptors. This chain is Photosystem II protein D1, found in Tetradesmus obliquus (Green alga).